Here is a 538-residue protein sequence, read N- to C-terminus: Atos homolog protein B (538 aa).

Over residues 1–18 the composition is skewed to low complexity; the sequence is MRHVQAEPSPSSEPEAGP. Disordered stretches follow at residues 1–103, 153–185, 197–300, and 323–342; these read MRHV…GLLG, NTLH…QLHT, GGKS…VLDP, and SLRK…VPTP. Positions 227 to 238 are enriched in pro residues; sequence HTPPGPGPPGPC. Serine 254 and serine 255 each carry phosphoserine. Positions 323-334 are enriched in low complexity; sequence SLRKGPGLLSPP. Positions 348–430 are required for macropage invasion; that stretch reads LLGSFEESLL…VPKVGTIQVT (83 aa). A transactivation domain 1 (TAD1) region spans residues 436 to 444; that stretch reads QTVVKMFLV.

The protein belongs to the ATOS family.

It is found in the nucleus. Functionally, transcription regulator that may syncronize transcriptional and translational programs. This Pongo abelii (Sumatran orangutan) protein is Atos homolog protein B.